The primary structure comprises 383 residues: Arginine biosynthesis bifunctional protein ArgJ 1 (383 aa).

Residues 1–25 (MTVTAPKGSTGGGCRRGSKESGQPD) form a disordered region. Substrate-binding residues include T146, K168, T179, E259, N378, and S383. Residue T179 is the Nucleophile of the active site.

The protein belongs to the ArgJ family. As to quaternary structure, heterotetramer of two alpha and two beta chains.

It is found in the cytoplasm. It catalyses the reaction N(2)-acetyl-L-ornithine + L-glutamate = N-acetyl-L-glutamate + L-ornithine. It carries out the reaction L-glutamate + acetyl-CoA = N-acetyl-L-glutamate + CoA + H(+). It functions in the pathway amino-acid biosynthesis; L-arginine biosynthesis; L-ornithine and N-acetyl-L-glutamate from L-glutamate and N(2)-acetyl-L-ornithine (cyclic): step 1/1. The protein operates within amino-acid biosynthesis; L-arginine biosynthesis; N(2)-acetyl-L-ornithine from L-glutamate: step 1/4. Catalyzes two activities which are involved in the cyclic version of arginine biosynthesis: the synthesis of N-acetylglutamate from glutamate and acetyl-CoA as the acetyl donor, and of ornithine by transacetylation between N(2)-acetylornithine and glutamate. This is Arginine biosynthesis bifunctional protein ArgJ 1 from Streptomyces clavuligerus.